The following is a 238-amino-acid chain: NADH-quinone oxidoreductase subunit C (238 aa).

A disordered region spans residues 1-20 (MSSPDQNPSDAAGQTGSSNE).

It belongs to the complex I 30 kDa subunit family. In terms of assembly, NDH-1 is composed of 14 different subunits. Subunits NuoB, C, D, E, F, and G constitute the peripheral sector of the complex.

It is found in the cell membrane. It carries out the reaction a quinone + NADH + 5 H(+)(in) = a quinol + NAD(+) + 4 H(+)(out). In terms of biological role, NDH-1 shuttles electrons from NADH, via FMN and iron-sulfur (Fe-S) centers, to quinones in the respiratory chain. The immediate electron acceptor for the enzyme in this species is believed to be a menaquinone. Couples the redox reaction to proton translocation (for every two electrons transferred, four hydrogen ions are translocated across the cytoplasmic membrane), and thus conserves the redox energy in a proton gradient. The chain is NADH-quinone oxidoreductase subunit C from Mycobacterium marinum (strain ATCC BAA-535 / M).